The primary structure comprises 417 residues: Phosphoglycerate kinase (417 aa).

Substrate-binding positions include D24 to N26, R44, H67 to R70, R126, and R170. ATP contacts are provided by residues K220, G316, E347, and G373–S376.

The protein belongs to the phosphoglycerate kinase family. As to quaternary structure, monomer.

Its subcellular location is the cytoplasm. It carries out the reaction (2R)-3-phosphoglycerate + ATP = (2R)-3-phospho-glyceroyl phosphate + ADP. It functions in the pathway carbohydrate degradation; glycolysis; pyruvate from D-glyceraldehyde 3-phosphate: step 2/5. The polypeptide is Phosphoglycerate kinase (Renibacterium salmoninarum (strain ATCC 33209 / DSM 20767 / JCM 11484 / NBRC 15589 / NCIMB 2235)).